Consider the following 921-residue polypeptide: Ribosome-releasing factor 2, mitochondrial (921 aa).

Residues 1-55 (MVSALLLRARQNGRAARCLDYPKVKCWALASLPKSSLEKPGFSQVRRFSVFHPQS) constitute a mitochondrion transit peptide. A tr-type G domain is found at 60 to 368 (DLTRNIGIIA…SVVDLLPSPQ (309 aa)). GTP contacts are provided by residues 69–76 (AHIDAGKT), 152–156 (DTPGH), and 206–209 (NKMD).

It belongs to the TRAFAC class translation factor GTPase superfamily. Classic translation factor GTPase family. EF-G/EF-2 subfamily.

The protein localises to the mitochondrion. In terms of biological role, mitochondrial GTPase that mediates the disassembly of ribosomes from messenger RNA at the termination of mitochondrial protein biosynthesis. Not involved in the GTP-dependent ribosomal translocation step during translation elongation. The protein is Ribosome-releasing factor 2, mitochondrial (mef2) of Emericella nidulans (strain FGSC A4 / ATCC 38163 / CBS 112.46 / NRRL 194 / M139) (Aspergillus nidulans).